Reading from the N-terminus, the 332-residue chain is Methionine synthase (332 aa).

Zn(2+) contacts are provided by H211, C213, and C296.

The protein belongs to the archaeal MetE family. Requires Zn(2+) as cofactor.

It participates in amino-acid biosynthesis; L-methionine biosynthesis via de novo pathway. Its function is as follows. Catalyzes the transfer of a methyl group to L-homocysteine resulting in methionine formation. The physiological methyl donor is unknown. The polypeptide is Methionine synthase (Saccharolobus islandicus (strain L.S.2.15 / Lassen #1) (Sulfolobus islandicus)).